A 225-amino-acid polypeptide reads, in one-letter code: MSRTSSAPLLVLSAALAVLASTCIADPEPVQDFCVAVVPRAGDAAAAACPAYPGFPCKPASTVVSDDFFFAGLAVASDTDNRFGFNVTAANAETFPGLNTLGVSIGRVDLAPGGVNPLHSHPRATELIHVVAGRVLAGFVSTAGEFYSKVLGEGETFVVPRGMIHFQYNVGGVAAQVITAFNSQMPGVVAAGSTLFGSDPEIPDAVLAKSFQVDAKIIKLLKSKF.

Residues 1–25 (MSRTSSAPLLVLSAALAVLASTCIA) form the signal peptide. Residues C34 and C57 are joined by a disulfide bond. The Cupin type-1 domain maps to 71-219 (AGLAVASDTD…SFQVDAKIIK (149 aa)). N86 carries N-linked (GlcNAc...) asparagine glycosylation. Mn(2+) is bound by residues H119, H121, E126, and H165.

The protein belongs to the germin family. Oligomer (believed to be a pentamer but probably hexamer).

It is found in the secreted. The protein resides in the extracellular space. Its subcellular location is the apoplast. In terms of biological role, may play a role in plant defense. Probably has no oxalate oxidase activity even if the active site is conserved. The sequence is that of Germin-like protein 3-8 from Oryza sativa subsp. japonica (Rice).